The chain runs to 1175 residues: Potassium/sodium hyperpolarization-activated cyclic nucleotide-gated channel 4 (1175 aa).

Topologically, residues 1-259 (MDKLPPSMRK…SAGFWIIHPY (259 aa)) are cytoplasmic. The disordered stretch occupies residues 17–186 (QQVGAKAWIM…SSCGEQRPAD (170 aa)). The span at 26-36 (MDEEEDAEEEG) shows a compositional bias: acidic residues. Over residues 60–75 (PSAAAAAAGGAESRGA) the composition is skewed to low complexity. The segment covering 111 to 126 (SRGGGGGGGSTGGGSH) has biased composition (gly residues). Basic and acidic residues predominate over residues 128–140 (HLHDSAEERRLIA). The residue at position 145 (Ser-145) is a Phosphoserine. Residues 162–175 (PGAPAPPAASPPQV) are compositionally biased toward pro residues. Residues 260–288 (SDFRFYWDLTMLLLMVGNLIIIPVGITFF) form a helical membrane-spanning segment. Residues 289-292 (KDEN) are Extracellular-facing. Residues 293-316 (TTPWIVFNVVSDTFFLIDLVLNFR) traverse the membrane as a helical segment. At 317–329 (TGIVVEDNTDIIL) the chain is on the cytoplasmic side. The helical transmembrane segment at 330-352 (DPRRIKMKYLKSWFVVDFVSSIP) threads the bilayer. Over 353 to 374 (VDYIFLIVETRIDSEVYKTARA) the chain is Extracellular. Residues 375 to 410 (LRIVRFTKILSLLRLLRLSRLIRYIHQWEEIFHMTY) traverse the membrane as a helical; Voltage-sensor segment. Topologically, residues 411-413 (DLA) are cytoplasmic. A helical membrane pass occupies residues 414–444 (SAVVRIVNLIGMMLLLCHWDGCLQFLVPMLQ). At 445–449 (DFPDD) the chain is on the extracellular side. Positions 450 to 478 (CWVSLNNMVNNSWGKQYSYALFKAMSHML) form an intramembrane region, pore-forming. The Extracellular segment spans residues 479-488 (CIGYGRQAPM). Residues 489-521 (GMSDVWLTMLSMIVGATCYAMFIGHATALIQSL) form a helical membrane-spanning segment. At 522 to 1175 (DSSRRQYQEK…PVRSKLPSNL (654 aa)) the chain is on the cytoplasmic side. 4 residues coordinate 3',5'-cyclic GMP: Tyr-560, Lys-563, Phe-565, and Glu-567. 7 residues coordinate 3',5'-cyclic AMP: Gly-660, Glu-661, Cys-663, Arg-670, Thr-671, Val-674, and Arg-711. Disordered regions lie at residues 801–820 (AIFR…AGQT) and 830–1175 (LAPS…PSNL). 4 stretches are compositionally biased toward low complexity: residues 839–854 (SPAS…SSAS), 900–912 (LGGS…SPLL), 948–966 (SPTS…LSPG), and 984–1004 (RLPF…SPRG). The span at 1038-1050 (ASSPPPPPPPPAP) shows a compositional bias: pro residues. Phosphoserine is present on residues Ser-1089 and Ser-1093. Residues 1102-1114 (PPFPRAPGRPPGA) are compositionally biased toward pro residues.

Belongs to the potassium channel HCN family. Homotetramer. The channel is composed of a homo- or heterotetrameric complex of pore-forming subunits. Interacts with PEX5L with a 4:4 HCN4:PEX5L stoichiometry; reduces the effects of cAMP on the voltage-dependence and rate of activation. Interacts with IRAG1; regulates HCN4 channel activity. Interacts with IRAG2; regulates HCN4 channel activity. Post-translationally, S-palmitoylated. Highly expressed in the heart sinoatrial node (SAN). Not detected in atrium, ventricle, forebrain or cerebellum. Detected at very low levels in total brain.

It localises to the cell membrane. It carries out the reaction K(+)(in) = K(+)(out). The catalysed reaction is Na(+)(in) = Na(+)(out). With respect to regulation, activated by cAMP and to a lesser extent by cGMP and cCMP. cAMP binding causes a conformation change that leads to the assembly of an active tetramer and channel opening by shifting the voltage-dependency towards more positive voltages. Binding of cAMP removes a tonic inhibition conferred by cyclic nucleotide-binding domain (CNBD) on channel opening. Cyclic dinucleotides can modulate HCN4 channel; cyclic dinucleotides acting as potent antagonists of cAMP. Inhibited by extracellular Cs(+) ions. Auxiliary subunits can also regulate HCN4 channel. IRAG1 causes a gain-of-function by shifting HCN4 activation to more depolarized membrane potentials in the absence of cAMP. In contrast, IRAG2 causes a loss-of-function by inhibiting cAMP-dependent potentiation of HCN4 activation. Its function is as follows. Hyperpolarization-activated ion channel that are permeable to Na(+) and K(+) ions with very slow activation and inactivation. Exhibits higher selectivity for K(+) over Na(+) ions. Contributes to the native pacemaker currents in heart (If) that regulate the rhythm of heart beat. Contributes to the native pacemaker currents in neurons (Ih). May mediate responses to sour stimuli. The chain is Potassium/sodium hyperpolarization-activated cyclic nucleotide-gated channel 4 (HCN4) from Oryctolagus cuniculus (Rabbit).